The sequence spans 249 residues: Probable transcriptional regulatory protein Minf_0651 (249 aa).

It belongs to the TACO1 family.

Its subcellular location is the cytoplasm. The polypeptide is Probable transcriptional regulatory protein Minf_0651 (Methylacidiphilum infernorum (isolate V4) (Methylokorus infernorum (strain V4))).